A 421-amino-acid polypeptide reads, in one-letter code: Lipid II:glycine glycyltransferase (421 aa).

This sequence belongs to the FemABX family. As to quaternary structure, monomer.

Its subcellular location is the cytoplasm. It catalyses the reaction beta-D-GlcNAc-(1-&gt;4)-Mur2Ac(oyl-L-Ala-D-isoglutaminyl-L-Lys-D-Ala-D-Ala)-di-trans,octa-cis-undecaprenyl diphosphate + glycyl-tRNA(Gly) = beta-D-GlcNAc-(1-&gt;4)-Mur2Ac(oyl-L-Ala-D-isoglutaminyl-L-Lys-(N(6)-Gly)-D-Ala-D-Ala)-di-trans,octa-cis-undecaprenyl diphosphate + tRNA(Gly) + H(+). Catalyzes the incorporation of the first glycine of the pentaglycine interpeptide bridge, which is characteristic of the S.aureus peptidoglycan. This glycine is added to the epsilon-amino group of the L-lysine of the membrane-bound lipid II intermediate (GlcNAc-(beta-1,4)-N-acetylmuramic acid(-L-Ala-D-iGln-L-Lys-D-Ala-D-Ala)-pyrophosphoryl-undecaprenol), using glycyl-tRNA(Gly) as donor, in a ribosome-independent mechanism. Involved in methicillin resistance. This chain is Lipid II:glycine glycyltransferase (femX), found in Staphylococcus aureus (strain USA300).